The following is a 379-amino-acid chain: Gap junction alpha-1 protein (379 aa).

The Cytoplasmic segment spans residues Gly-2–Lys-23. The helical transmembrane segment at Val-24–Ala-44 threads the bilayer. At Trp-45–Arg-76 the chain is on the extracellular side. 2 cysteine pairs are disulfide-bonded: Cys-54/Cys-192 and Cys-187/Cys-198. Residues Phe-77–Phe-97 traverse the membrane as a helical segment. Residues Tyr-98–Ser-163 lie on the Cytoplasmic side of the membrane. The helical transmembrane segment at Val-164 to Ile-184 threads the bilayer. At Tyr-185–Thr-207 the chain is on the extracellular side. The helical transmembrane segment at Ile-208–Leu-228 threads the bilayer. The Cytoplasmic portion of the chain corresponds to Phe-229–Ile-379. A disordered region spans residues Ser-322–Ile-379. Residues Arg-359 to Arg-371 show a composition bias toward low complexity.

The protein belongs to the connexin family. Alpha-type (group II) subfamily. As to quaternary structure, a connexon is composed of a hexamer of connexins. Interacts with TMEM65. As to expression, expressed in most tissues. Highest levels found in eye and brain.

Its subcellular location is the cell membrane. The protein resides in the cell junction. The protein localises to the gap junction. Functionally, one gap junction consists of a cluster of closely packed pairs of transmembrane channels, the connexons, through which materials of low MW diffuse from one cell to a neighboring cell. Plays an essential role in gap junction communication in the ventricles. The chain is Gap junction alpha-1 protein (gja1) from Xenopus laevis (African clawed frog).